A 534-amino-acid polypeptide reads, in one-letter code: CTP synthase (534 aa).

An amidoligase domain region spans residues 1–265; that stretch reads MKYIVVTGGV…TTQLMKHLRL (265 aa). Position 12 (S12) interacts with CTP. Position 12 (S12) interacts with UTP. Position 13–18 (13–18) interacts with ATP; it reads GLGKGI. Y53 serves as a coordination point for L-glutamine. D70 is a binding site for ATP. 2 residues coordinate Mg(2+): D70 and E140. Residues 147–149, 186–191, and K222 contribute to the CTP site; these read DIE and KTKPTQ. Residues 186–191 and K222 contribute to the UTP site; that span reads KTKPTQ. Residues 289–530 enclose the Glutamine amidotransferase type-1 domain; the sequence is KLAIVGKYTN…VRAMCKYRKE (242 aa). G352 is a binding site for L-glutamine. C379 serves as the catalytic Nucleophile; for glutamine hydrolysis. L-glutamine contacts are provided by residues 380 to 383, E403, and R460; that span reads LGMQ. Active-site residues include H503 and E505.

It belongs to the CTP synthase family. As to quaternary structure, homotetramer.

It catalyses the reaction UTP + L-glutamine + ATP + H2O = CTP + L-glutamate + ADP + phosphate + 2 H(+). It carries out the reaction L-glutamine + H2O = L-glutamate + NH4(+). The enzyme catalyses UTP + NH4(+) + ATP = CTP + ADP + phosphate + 2 H(+). Its pathway is pyrimidine metabolism; CTP biosynthesis via de novo pathway; CTP from UDP: step 2/2. With respect to regulation, allosterically activated by GTP, when glutamine is the substrate; GTP has no effect on the reaction when ammonia is the substrate. The allosteric effector GTP functions by stabilizing the protein conformation that binds the tetrahedral intermediate(s) formed during glutamine hydrolysis. Inhibited by the product CTP, via allosteric rather than competitive inhibition. In terms of biological role, catalyzes the ATP-dependent amination of UTP to CTP with either L-glutamine or ammonia as the source of nitrogen. Regulates intracellular CTP levels through interactions with the four ribonucleotide triphosphates. This chain is CTP synthase, found in Methanosarcina mazei (strain ATCC BAA-159 / DSM 3647 / Goe1 / Go1 / JCM 11833 / OCM 88) (Methanosarcina frisia).